A 120-amino-acid polypeptide reads, in one-letter code: Small ribosomal subunit protein bS6 (120 aa).

It belongs to the bacterial ribosomal protein bS6 family.

Its function is as follows. Binds together with bS18 to 16S ribosomal RNA. This chain is Small ribosomal subunit protein bS6, found in Blochmanniella floridana.